Here is a 418-residue protein sequence, read N- to C-terminus: Transmembrane protease serine 11D (418 aa).

At 1–20 the chain is on the cytoplasmic side; that stretch reads MYRPARVTSTSRFLNPYVVC. A helical; Signal-anchor for type II membrane protein membrane pass occupies residues 21-41; sequence FIVVAGVVILAVTIALLVYFL. At 42 to 418 the chain is on the extracellular side; that stretch reads AFDQKSYFYR…LDWIRQQTGI (377 aa). Residues 46-163 form the SEA domain; that stretch reads KSYFYRSSFQ…STEITSLTDQ (118 aa). N-linked (GlcNAc...) asparagine glycosylation is present at N144. Intrachain disulfides connect C173-C292, C212-C228, C337-C353, and C364-C393. The Peptidase S1 domain maps to 187-417; that stretch reads ILGGTEAEEG…YLDWIRQQTG (231 aa). Residues H227 and D272 each act as charge relay system in the active site. The active-site Charge relay system is S368.

The protein belongs to the peptidase S1 family. In terms of assembly, monomer. As to expression, located in the cells of the submucosal serous glands of the bronchi and trachea.

It is found in the cell membrane. Its subcellular location is the secreted. Strongly inhibited by diisopropyl fluorophosphate, leupeptin, antipain, aprotinin, and soybean trypsin inhibitor, but hardly inhibited by secretory leukocyte protease inhibitor at 10 microM. Its function is as follows. May play some biological role in the host defense system on the mucous membrane independently of or in cooperation with other substances in airway mucous or bronchial secretions. Plays a role in the proteolytic processing of ACE2. Proteolytically cleaves and activates the human coronavirus 229E (HCoV-229E) spike glycoprotein which facilitate virus-cell membrane fusions; spike proteins are synthesized and maintained in precursor intermediate folding states and proteolysis permits the refolding and energy release required to create stable virus-cell linkages and membrane coalescence. Preferentially cleaves the C-terminal side of arginine residues at the P1 position of certain peptides, cleaving Boc-Phe-Ser-Arg-4-methylcoumaryl-7-amide most efficiently and having an optimum pH of 8.6 with this substrate. The chain is Transmembrane protease serine 11D (TMPRSS11D) from Homo sapiens (Human).